The sequence spans 173 residues: Inorganic pyrophosphatase (173 aa).

Substrate contacts are provided by K28, R42, and Y54. Mg(2+)-binding residues include D64, D69, and D101. Residue Y140 coordinates substrate.

The protein belongs to the PPase family. Homohexamer. Mg(2+) serves as cofactor.

The protein resides in the cytoplasm. It catalyses the reaction diphosphate + H2O = 2 phosphate + H(+). Catalyzes the hydrolysis of inorganic pyrophosphate (PPi) forming two phosphate ions. The sequence is that of Inorganic pyrophosphatase from Helicobacter pylori (strain ATCC 700392 / 26695) (Campylobacter pylori).